Here is a 346-residue protein sequence, read N- to C-terminus: Methionine import ATP-binding protein MetN 1 (346 aa).

In terms of domain architecture, ABC transporter spans 2 to 241 (IELKNVSKVF…PQHVTTKKFV (240 aa)). 38 to 45 (GYSGAGKS) provides a ligand contact to ATP.

Belongs to the ABC transporter superfamily. Methionine importer (TC 3.A.1.24) family. In terms of assembly, the complex is composed of two ATP-binding proteins (MetN), two transmembrane proteins (MetI) and a solute-binding protein (MetQ).

It is found in the cell membrane. The enzyme catalyses L-methionine(out) + ATP + H2O = L-methionine(in) + ADP + phosphate + H(+). The catalysed reaction is D-methionine(out) + ATP + H2O = D-methionine(in) + ADP + phosphate + H(+). Functionally, part of the ABC transporter complex MetNIQ involved in methionine import. Responsible for energy coupling to the transport system. This chain is Methionine import ATP-binding protein MetN 1, found in Bacillus cereus (strain ATCC 10987 / NRS 248).